The following is a 79-amino-acid chain: Putative defensin-like protein 203 (79 aa).

Residues Met1–Ala27 form the signal peptide. 4 cysteine pairs are disulfide-bonded: Cys30–Cys79, Cys40–Cys64, Cys49–Cys73, and Cys53–Cys75.

It belongs to the DEFL family.

The protein resides in the secreted. The sequence is that of Putative defensin-like protein 203 from Arabidopsis thaliana (Mouse-ear cress).